Reading from the N-terminus, the 620-residue chain is 1-deoxy-D-xylulose-5-phosphate synthase (620 aa).

Thiamine diphosphate is bound by residues His80 and 121-123 (GHS). Asp152 provides a ligand contact to Mg(2+). Residues 153-154 (GA), Asn181, Tyr288, and Glu370 each bind thiamine diphosphate. Position 181 (Asn181) interacts with Mg(2+).

It belongs to the transketolase family. DXPS subfamily. As to quaternary structure, homodimer. The cofactor is Mg(2+). Thiamine diphosphate is required as a cofactor.

The enzyme catalyses D-glyceraldehyde 3-phosphate + pyruvate + H(+) = 1-deoxy-D-xylulose 5-phosphate + CO2. It functions in the pathway metabolic intermediate biosynthesis; 1-deoxy-D-xylulose 5-phosphate biosynthesis; 1-deoxy-D-xylulose 5-phosphate from D-glyceraldehyde 3-phosphate and pyruvate: step 1/1. Functionally, catalyzes the acyloin condensation reaction between C atoms 2 and 3 of pyruvate and glyceraldehyde 3-phosphate to yield 1-deoxy-D-xylulose-5-phosphate (DXP). In Citrobacter koseri (strain ATCC BAA-895 / CDC 4225-83 / SGSC4696), this protein is 1-deoxy-D-xylulose-5-phosphate synthase.